The sequence spans 406 residues: Succinylornithine transaminase (406 aa).

K252 carries the N6-(pyridoxal phosphate)lysine modification.

Belongs to the class-III pyridoxal-phosphate-dependent aminotransferase family. AstC subfamily. Requires pyridoxal 5'-phosphate as cofactor.

The catalysed reaction is N(2)-succinyl-L-ornithine + 2-oxoglutarate = N-succinyl-L-glutamate 5-semialdehyde + L-glutamate. It functions in the pathway amino-acid degradation; L-arginine degradation via AST pathway; L-glutamate and succinate from L-arginine: step 3/5. In terms of biological role, catalyzes the transamination of N(2)-succinylornithine and alpha-ketoglutarate into N(2)-succinylglutamate semialdehyde and glutamate. Can also act as an acetylornithine aminotransferase. This chain is Succinylornithine transaminase, found in Escherichia coli O17:K52:H18 (strain UMN026 / ExPEC).